The following is a 215-amino-acid chain: Octanoyltransferase (215 aa).

In terms of domain architecture, BPL/LPL catalytic spans 35–210 (PDTPDQLWVV…HCLEAIVEYG (176 aa)). Residues 74-81 (RGGQVTYH), 141-143 (SVG), and 154-156 (GLA) contribute to the substrate site. Cys-172 serves as the catalytic Acyl-thioester intermediate.

This sequence belongs to the LipB family.

It is found in the cytoplasm. The enzyme catalyses octanoyl-[ACP] + L-lysyl-[protein] = N(6)-octanoyl-L-lysyl-[protein] + holo-[ACP] + H(+). It participates in protein modification; protein lipoylation via endogenous pathway; protein N(6)-(lipoyl)lysine from octanoyl-[acyl-carrier-protein]: step 1/2. Catalyzes the transfer of endogenously produced octanoic acid from octanoyl-acyl-carrier-protein onto the lipoyl domains of lipoate-dependent enzymes. Lipoyl-ACP can also act as a substrate although octanoyl-ACP is likely to be the physiological substrate. This chain is Octanoyltransferase, found in Alkalilimnicola ehrlichii (strain ATCC BAA-1101 / DSM 17681 / MLHE-1).